Reading from the N-terminus, the 283-residue chain is N-terminal Xaa-Pro-Lys N-methyltransferase 2 (283 aa).

Residues Gly-124, Arg-129, Asp-146, 174-175 (LQ), and Gln-190 contribute to the S-adenosyl-L-methionine site.

The protein belongs to the methyltransferase superfamily. NTM1 family.

Its subcellular location is the nucleus. The catalysed reaction is N-terminal L-alanyl-L-prolyl-L-lysyl-[protein] + S-adenosyl-L-methionine = N-terminal N-methyl-L-alanyl-L-prolyl-L-lysyl-[protein] + S-adenosyl-L-homocysteine + H(+). It catalyses the reaction N-terminal L-prolyl-L-prolyl-L-lysyl-[protein] + S-adenosyl-L-methionine = N-terminal N-methyl-L-prolyl-L-prolyl-L-lysyl-[protein] + S-adenosyl-L-homocysteine + H(+). The enzyme catalyses N-terminal L-seryl-L-prolyl-L-lysyl-[protein] + S-adenosyl-L-methionine = N-terminal N-methyl-L-seryl-L-prolyl-L-lysyl-[protein] + S-adenosyl-L-homocysteine + H(+). Functionally, alpha N-methyltransferase that methylates the N-terminus of target proteins containing the N-terminal motif [Ala/Pro/Ser]-Pro-Lys when the initiator Met is cleaved. Specifically catalyzes monomethylation of exposed alpha-amino group of Ala or Ser residue in the [Ala/Ser]-Pro-Lys motif and Pro in the Pro-Pro-Lys motif. Predominantly functions as a mono-methyltransferase but is also able to di-/tri-methylate the GPKRIA peptide and di-methylate the PPKRIA peptide (in vitro). May activate NTMT1 by priming its substrates for trimethylation. This chain is N-terminal Xaa-Pro-Lys N-methyltransferase 2 (Ntmt2), found in Mus musculus (Mouse).